Reading from the N-terminus, the 225-residue chain is Imidazole glycerol phosphate synthase subunit HisH (225 aa).

One can recognise a Glutamine amidotransferase type-1 domain in the interval 5-220; that stretch reads KNVIVDTGCA…LELDSTELNQ (216 aa). Residue C80 is the Nucleophile of the active site. Residues H195 and E197 contribute to the active site.

As to quaternary structure, heterodimer of HisH and HisF.

The protein localises to the cytoplasm. It carries out the reaction 5-[(5-phospho-1-deoxy-D-ribulos-1-ylimino)methylamino]-1-(5-phospho-beta-D-ribosyl)imidazole-4-carboxamide + L-glutamine = D-erythro-1-(imidazol-4-yl)glycerol 3-phosphate + 5-amino-1-(5-phospho-beta-D-ribosyl)imidazole-4-carboxamide + L-glutamate + H(+). The enzyme catalyses L-glutamine + H2O = L-glutamate + NH4(+). The protein operates within amino-acid biosynthesis; L-histidine biosynthesis; L-histidine from 5-phospho-alpha-D-ribose 1-diphosphate: step 5/9. Functionally, IGPS catalyzes the conversion of PRFAR and glutamine to IGP, AICAR and glutamate. The HisH subunit catalyzes the hydrolysis of glutamine to glutamate and ammonia as part of the synthesis of IGP and AICAR. The resulting ammonia molecule is channeled to the active site of HisF. This chain is Imidazole glycerol phosphate synthase subunit HisH, found in Colwellia psychrerythraea (strain 34H / ATCC BAA-681) (Vibrio psychroerythus).